A 95-amino-acid polypeptide reads, in one-letter code: Alpha-conotoxin-like Cp20.5 (95 aa).

The N-terminal stretch at 1–24 is a signal peptide; the sequence is MPKLAVVLLVLLILPLSYFDAAGG. A propeptide spanning residues 25–45 is cleaved from the precursor; it reads QAVQGDRRGNGLARYLQRNGR. E50 is subject to 4-carboxyglutamate. P56 carries the 4-hydroxyproline modification. Cystine bridges form between C64–C73, C69–C81, C74–C91, and C79–C93.

Belongs to the conotoxin D superfamily. As to quaternary structure, hetero-, homo- or pseudo-homodimer (identical sequence, different post-translational modifications). Expressed by the venom duct.

The protein resides in the secreted. Alpha-conotoxins act on postsynaptic membranes, they bind to the nicotinic acetylcholine receptors (nAChR) and thus inhibit them. Through its two C-terminal domains, this homodimeric protein would bind to two nAChR allosteric sites, located outside the nAChR C-loop of the principal binding face and at the adjacent binding interface in a clockwise direction. This toxin specifically blocks mammalian neuronal nAChR of the alpha-7/CHRNA7, alpha-3-beta-2/CHRNA3-CHRNB2 and alpha-4-beta-2/CHRNA4-CHRNB2 subtypes. The chain is Alpha-conotoxin-like Cp20.5 from Conus capitaneus (Captain cone).